The primary structure comprises 271 residues: Fork head domain-containing protein FD5 (271 aa).

The segment at residues 12-103 (QKPPYSYISL…FDMFENGSLL (92 aa)) is a DNA-binding region (fork-head).

Expressed in early embryogenesis in 14 symmetrical pairs of segmentally arranged neuroblasts and in developing peripheral nervous system. Also, later in embryogenesis, in a cluster of cells in head region.

It is found in the nucleus. In terms of biological role, involved in development during embryogenesis. This chain is Fork head domain-containing protein FD5 (fd96Cb), found in Drosophila melanogaster (Fruit fly).